A 75-amino-acid chain; its full sequence is Exodeoxyribonuclease 7 small subunit (75 aa).

The protein belongs to the XseB family. Heterooligomer composed of large and small subunits.

The protein resides in the cytoplasm. It carries out the reaction Exonucleolytic cleavage in either 5'- to 3'- or 3'- to 5'-direction to yield nucleoside 5'-phosphates.. Its function is as follows. Bidirectionally degrades single-stranded DNA into large acid-insoluble oligonucleotides, which are then degraded further into small acid-soluble oligonucleotides. The sequence is that of Exodeoxyribonuclease 7 small subunit from Listeria innocua serovar 6a (strain ATCC BAA-680 / CLIP 11262).